A 333-amino-acid chain; its full sequence is B3 domain-containing transcription factor NGA4 (333 aa).

A DNA-binding region (TF-B3) is located at residues phenylalanine 36–arginine 145. The segment at valine 268 to leucine 333 is disordered. Residues glutamate 323–leucine 333 are compositionally biased toward basic and acidic residues.

It is found in the nucleus. Regulates lateral organ growth. Functionally redundant with NGA1, NGA2 and NGA3. This is B3 domain-containing transcription factor NGA4 (NGA4) from Arabidopsis thaliana (Mouse-ear cress).